The sequence spans 528 residues: 4-chlorobenzoate--CoA ligase (528 aa).

ATP contacts are provided by residues 161–169 (TSGTTGLPK), 300–305 (NIYGTT), and Asn-409.

Belongs to the ATP-dependent AMP-binding enzyme family. In terms of assembly, homodimer. It depends on Mg(2+) as a cofactor.

The catalysed reaction is 4-chlorobenzoate + ATP + CoA = 4-chlorobenzoyl-CoA + AMP + diphosphate. The protein operates within xenobiotic degradation; 4-chlorobenzoate degradation; 4-hydroxybenzoate from 4-chlorobenzoate: step 2/3. With respect to regulation, unaffected by 5,5'-dithiobis-(2-nitrobenzoic acid), 4-chloromercuribenzoate and sodium azide. Inhibited by Cu(2+), Fe(2+) and Zn(2+). Unaffected by Na(+), K(+) and Li(+). Functionally, catalyzes the formation of chlorobenzoyl-CoA via a 2 step reaction. First 4-chlorobenzoyl is adenylated by ATP, followed by acyl transfer from the 4-chlorobenzoyl-AMP intermediate to CoA. Benzoate, 4-bromobenzoate, 4-iodobenzoate and 4-methylbenzoate also act as substrates. Inactive towards 4-aminobenzoate, 4-hydroxybenzoate, 2-aminobenzoate, 2,3-dihydroxybenzoate, 4-coumarate and the aliphatic carboxylic acids palmate, caproate, laurate and butyrate. Negligible activity is detected when ATP is replaced by UTP, CTP or GTP as cosubstrate. This Pseudomonas sp. (strain CBS-3) protein is 4-chlorobenzoate--CoA ligase.